We begin with the raw amino-acid sequence, 170 residues long: SKP1-like protein 16 (170 aa).

The segment at 109 to 167 (ILAVNYLNVQDLLGLTCQTVADHMKDMSPEEVRELFNIENDYTPEEEDAIRKENAWAFE) is interaction with the F-box domain of F-box proteins.

Belongs to the SKP1 family. Part of a SCF (SKP1-cullin-F-box) protein ligase complex. Interacts with CPR1/CPR30, At3g61590 and At4g11590. Mainly detected in the siliques.

Its subcellular location is the nucleus. It participates in protein modification; protein ubiquitination. In terms of biological role, involved in ubiquitination and subsequent proteasomal degradation of target proteins. Together with CUL1, RBX1 and a F-box protein, it forms a SCF E3 ubiquitin ligase complex. The functional specificity of this complex depends on the type of F-box protein. In the SCF complex, it serves as an adapter that links the F-box protein to CUL1. This is SKP1-like protein 16 (ASK16) from Arabidopsis thaliana (Mouse-ear cress).